Here is a 197-residue protein sequence, read N- to C-terminus: MEPRIASTVRTTRETDIQIRLDLDGTGRVQAETGVPFLDHMLAQIATHGLIDIDVSAQGDLHIDDHHTNEDVGIAFGQCLAKALGDKRGISRFGHFAAPLDEALVQVVLDLSGRPHLSYGLEIPTQRVGSYDTQLVREFYQAVVNNSSMTLHLRQWAGINSHHIIEASFKAFARALRLAVEIDPRRAGSLPSSKGAL.

The protein belongs to the imidazoleglycerol-phosphate dehydratase family.

It localises to the cytoplasm. The catalysed reaction is D-erythro-1-(imidazol-4-yl)glycerol 3-phosphate = 3-(imidazol-4-yl)-2-oxopropyl phosphate + H2O. It participates in amino-acid biosynthesis; L-histidine biosynthesis; L-histidine from 5-phospho-alpha-D-ribose 1-diphosphate: step 6/9. The polypeptide is Imidazoleglycerol-phosphate dehydratase (Gloeobacter violaceus (strain ATCC 29082 / PCC 7421)).